Here is a 418-residue protein sequence, read N- to C-terminus: NADH-quinone oxidoreductase subunit D (418 aa).

Belongs to the complex I 49 kDa subunit family. In terms of assembly, NDH-1 is composed of 14 different subunits. Subunits NuoB, C, D, E, F, and G constitute the peripheral sector of the complex.

The protein resides in the cell inner membrane. The enzyme catalyses a quinone + NADH + 5 H(+)(in) = a quinol + NAD(+) + 4 H(+)(out). NDH-1 shuttles electrons from NADH, via FMN and iron-sulfur (Fe-S) centers, to quinones in the respiratory chain. The immediate electron acceptor for the enzyme in this species is believed to be ubiquinone. Couples the redox reaction to proton translocation (for every two electrons transferred, four hydrogen ions are translocated across the cytoplasmic membrane), and thus conserves the redox energy in a proton gradient. This is NADH-quinone oxidoreductase subunit D from Bordetella bronchiseptica (strain ATCC BAA-588 / NCTC 13252 / RB50) (Alcaligenes bronchisepticus).